We begin with the raw amino-acid sequence, 56 residues long: Zinc finger mu-protein HVO_0758 (56 aa).

4 residues coordinate Zn(2+): Cys-23, Cys-26, Cys-45, and Cys-48. 2 consecutive short sequence motifs (c(P)XCG motif) follow at residues 23–27 and 45–49; these read CSECG and CADCG.

Monomer.

Its function is as follows. Zinc-binding protein that binds one zinc ion. Is involved in biofilm formation, swarming and glycerol metabolism regulation. This Haloferax volcanii (strain ATCC 29605 / DSM 3757 / JCM 8879 / NBRC 14742 / NCIMB 2012 / VKM B-1768 / DS2) (Halobacterium volcanii) protein is Zinc finger mu-protein HVO_0758.